Consider the following 207-residue polypeptide: High frequency lysogenization protein HflD homolog (207 aa).

This sequence belongs to the HflD family.

It is found in the cytoplasm. Its subcellular location is the cell inner membrane. This Tolumonas auensis (strain DSM 9187 / NBRC 110442 / TA 4) protein is High frequency lysogenization protein HflD homolog.